Reading from the N-terminus, the 951-residue chain is Replication protein A 70 kDa DNA-binding subunit C (951 aa).

The segment at 139–172 (AQTNNGTYSGGASMLGPSVAPRAEQAASNSSYGG) is disordered. Residues 320-403 (WTIKARVTAK…NTLNHDYEIT (84 aa)) constitute a DNA-binding region (OB). The C4-type zinc-finger motif lies at 612-639 (CPKLLPVGRQCNKKAINNGDGMWHCDRC).

This sequence belongs to the replication factor A protein 1 family. Heterotrimer of RPA1, RPA2 and RPA3 (canonical replication protein A complex). Interacts with RPA2C.

Its subcellular location is the nucleus. Its function is as follows. Component of the replication protein A complex (RPA) required for DNA recombination, repair and replication. The activity of RPA is mediated by single-stranded DNA binding and protein interactions. Probably involved in repair of double-strand DNA breaks (DSBs) induced by genotoxic stresses. This Oryza sativa subsp. japonica (Rice) protein is Replication protein A 70 kDa DNA-binding subunit C (RPA1C).